Here is a 260-residue protein sequence, read N- to C-terminus: Ubiquinone/menaquinone biosynthesis C-methyltransferase UbiE (260 aa).

Residues Thr-83, Asp-104, 132-133 (NA), and Ser-149 each bind S-adenosyl-L-methionine.

The protein belongs to the class I-like SAM-binding methyltransferase superfamily. MenG/UbiE family.

It catalyses the reaction a 2-demethylmenaquinol + S-adenosyl-L-methionine = a menaquinol + S-adenosyl-L-homocysteine + H(+). The enzyme catalyses a 2-methoxy-6-(all-trans-polyprenyl)benzene-1,4-diol + S-adenosyl-L-methionine = a 5-methoxy-2-methyl-3-(all-trans-polyprenyl)benzene-1,4-diol + S-adenosyl-L-homocysteine + H(+). It participates in quinol/quinone metabolism; menaquinone biosynthesis; menaquinol from 1,4-dihydroxy-2-naphthoate: step 2/2. It functions in the pathway cofactor biosynthesis; ubiquinone biosynthesis. In terms of biological role, methyltransferase required for the conversion of demethylmenaquinol (DMKH2) to menaquinol (MKH2) and the conversion of 2-polyprenyl-6-methoxy-1,4-benzoquinol (DDMQH2) to 2-polyprenyl-3-methyl-6-methoxy-1,4-benzoquinol (DMQH2). The sequence is that of Ubiquinone/menaquinone biosynthesis C-methyltransferase UbiE from Vibrio cholerae serotype O1 (strain ATCC 39315 / El Tor Inaba N16961).